The primary structure comprises 138 residues: Nucleoside diphosphate kinase (138 aa).

6 residues coordinate ATP: Lys-11, Phe-59, Arg-87, Thr-93, Arg-104, and Asn-114. The active-site Pros-phosphohistidine intermediate is His-117.

This sequence belongs to the NDK family. Requires Mg(2+) as cofactor.

The protein resides in the cytoplasm. It catalyses the reaction a 2'-deoxyribonucleoside 5'-diphosphate + ATP = a 2'-deoxyribonucleoside 5'-triphosphate + ADP. The enzyme catalyses a ribonucleoside 5'-diphosphate + ATP = a ribonucleoside 5'-triphosphate + ADP. Its function is as follows. Major role in the synthesis of nucleoside triphosphates other than ATP. The ATP gamma phosphate is transferred to the NDP beta phosphate via a ping-pong mechanism, using a phosphorylated active-site intermediate. In Saccharolobus solfataricus (strain ATCC 35092 / DSM 1617 / JCM 11322 / P2) (Sulfolobus solfataricus), this protein is Nucleoside diphosphate kinase.